Here is a 391-residue protein sequence, read N- to C-terminus: Formate-dependent phosphoribosylglycinamide formyltransferase (391 aa).

N(1)-(5-phospho-beta-D-ribosyl)glycinamide is bound by residues 18–19 (EL) and glutamate 78. ATP is bound by residues arginine 110, lysine 151, 156 to 161 (SSGKGQ), 191 to 194 (EEFI), and glutamate 199. Residues 115-305 (DLASKDLKIK…EFELHLRAFL (191 aa)) form the ATP-grasp domain. Mg(2+)-binding residues include glutamate 264 and glutamate 276. N(1)-(5-phospho-beta-D-ribosyl)glycinamide contacts are provided by residues aspartate 283, lysine 353, and 360 to 361 (RR).

It belongs to the PurK/PurT family. Homodimer.

The enzyme catalyses N(1)-(5-phospho-beta-D-ribosyl)glycinamide + formate + ATP = N(2)-formyl-N(1)-(5-phospho-beta-D-ribosyl)glycinamide + ADP + phosphate + H(+). The protein operates within purine metabolism; IMP biosynthesis via de novo pathway; N(2)-formyl-N(1)-(5-phospho-D-ribosyl)glycinamide from N(1)-(5-phospho-D-ribosyl)glycinamide (formate route): step 1/1. In terms of biological role, involved in the de novo purine biosynthesis. Catalyzes the transfer of formate to 5-phospho-ribosyl-glycinamide (GAR), producing 5-phospho-ribosyl-N-formylglycinamide (FGAR). Formate is provided by PurU via hydrolysis of 10-formyl-tetrahydrofolate. The polypeptide is Formate-dependent phosphoribosylglycinamide formyltransferase (Prochlorococcus marinus (strain AS9601)).